The sequence spans 450 residues: 23S rRNA (uracil(1939)-C(5))-methyltransferase RlmD (450 aa).

One can recognise a TRAM domain in the interval 1 to 62 (MPVAGPLEIV…PSYEQATLVD (62 aa)). The [4Fe-4S] cluster site is built by Cys75, Cys81, Cys84, and Cys163. S-adenosyl-L-methionine-binding residues include Gln271, Phe300, Asn305, Glu321, Asn349, and Asp370. Catalysis depends on Cys406, which acts as the Nucleophile.

Belongs to the class I-like SAM-binding methyltransferase superfamily. RNA M5U methyltransferase family. RlmD subfamily.

The catalysed reaction is uridine(1939) in 23S rRNA + S-adenosyl-L-methionine = 5-methyluridine(1939) in 23S rRNA + S-adenosyl-L-homocysteine + H(+). In terms of biological role, catalyzes the formation of 5-methyl-uridine at position 1939 (m5U1939) in 23S rRNA. The polypeptide is 23S rRNA (uracil(1939)-C(5))-methyltransferase RlmD (Ralstonia nicotianae (strain ATCC BAA-1114 / GMI1000) (Ralstonia solanacearum)).